We begin with the raw amino-acid sequence, 436 residues long: Septin-7 (436 aa).

The residue at position 2 (Ser2) is an N-acetylserine. Tyr29 bears the Phosphotyrosine mark. Residues 46–315 enclose the Septin-type G domain; that stretch reads RGFEFTLMVV…ENYRSRKLAA (270 aa). The interval 46 to 316 is interaction with SEPTIN12; that stretch reads RGFEFTLMVV…NYRSRKLAAV (271 aa). The tract at residues 56 to 63 is G1 motif; that stretch reads GESGLGKS. 56–63 lines the GTP pocket; that stretch reads GESGLGKS. Phosphoserine is present on Ser76. Residues Thr89, Gly115, and 194–202 each bind GTP; that span reads KADTLTPEE. The tract at residues 112-115 is G3 motif; that stretch reads DTPG. Positions 193–196 are G4 motif; that stretch reads AKAD. At Thr227 the chain carries Phosphothreonine. GTP is bound by residues Gly249 and Arg264. A coiled-coil region spans residues 331–436; it reads TKSPLAQMEE…EKNKKKGKIF (106 aa). Residue Ser333 is modified to Phosphoserine. Lys372 carries the post-translational modification N6-acetyllysine. Basic and acidic residues predominate over residues 377 to 409; the sequence is ELQRRHEQMKKNLEAQHKELEEKRRQFEEEKAN. The segment at 377–436 is disordered; the sequence is ELQRRHEQMKKNLEAQHKELEEKRRQFEEEKANWEAQQRILEQQNSSRTLEKNKKKGKIF. Ser423 carries the post-translational modification Phosphoserine. At Thr425 the chain carries Phosphothreonine.

Belongs to the TRAFAC class TrmE-Era-EngA-EngB-Septin-like GTPase superfamily. Septin GTPase family. As to quaternary structure, septins polymerize into heterooligomeric protein complexes that form filaments, and associate with cellular membranes, actin filaments and microtubules. GTPase activity is required for filament formation. Filaments are assembled from asymmetrical heterotrimers, composed of SEPTIN2, SEPTIN6 and SEPTIN7 that associate head-to-head to form a hexameric unit. Within the trimer, directly interacts with SEPTIN6, while interaction with SEPTIN2 seems indirect. In the absence of SEPTIN6, forms homodimers. Interacts directly with CENPE and links CENPE to septin filaments composed of SEPTIN2, SEPTIN6 and SEPTIN7. Interacts with SEPTIN8, SEPTIN9 and SEPTIN11. Component of a septin core octameric complex consisting of SEPTIN12, SEPTIN7, SEPTIN6 and SEPTIN2 or SEPTIN4 in the order 12-7-6-2-2-6-7-12 or 12-7-6-4-4-6-7-12 and located in the sperm annulus; the SEPTIN12:SEPTIN7 association is mediated by the respective GTP-binding domains. Interacts with SEPTIN2 and SEPTIN5. Expressed in the cerebral cortex (at protein level).

The protein resides in the cytoplasm. It localises to the chromosome. It is found in the centromere. Its subcellular location is the kinetochore. The protein localises to the cytoskeleton. The protein resides in the spindle. It localises to the cleavage furrow. It is found in the midbody. Its subcellular location is the cilium axoneme. The protein localises to the cell projection. The protein resides in the cilium. It localises to the flagellum. Filament-forming cytoskeletal GTPase. Required for normal organization of the actin cytoskeleton. Required for normal progress through mitosis. Involved in cytokinesis. Required for normal association of CENPE with the kinetochore. Plays a role in ciliogenesis and collective cell movements. Forms a filamentous structure with SEPTIN12, SEPTIN6, SEPTIN2 and probably SEPTIN4 at the sperm annulus which is required for the structural integrity and motility of the sperm tail during postmeiotic differentiation. The polypeptide is Septin-7 (Mus musculus (Mouse)).